We begin with the raw amino-acid sequence, 134 residues long: UPF0216 protein AF_0460 (134 aa).

The protein belongs to the UPF0216 family.

The chain is UPF0216 protein AF_0460 from Archaeoglobus fulgidus (strain ATCC 49558 / DSM 4304 / JCM 9628 / NBRC 100126 / VC-16).